Consider the following 510-residue polypeptide: Lysine--tRNA ligase (510 aa).

Glu420 and Glu427 together coordinate Mg(2+).

It belongs to the class-II aminoacyl-tRNA synthetase family. In terms of assembly, homodimer. It depends on Mg(2+) as a cofactor.

It localises to the cytoplasm. It carries out the reaction tRNA(Lys) + L-lysine + ATP = L-lysyl-tRNA(Lys) + AMP + diphosphate. The sequence is that of Lysine--tRNA ligase from Clostridium novyi (strain NT).